A 331-amino-acid chain; its full sequence is Adenine deaminase (331 aa).

Residues H17, H19, and H197 each contribute to the Zn(2+) site. The Proton donor role is filled by E200. D278 is a Zn(2+) binding site. D279 serves as a coordination point for substrate.

This sequence belongs to the metallo-dependent hydrolases superfamily. Adenosine and AMP deaminases family. Adenine deaminase type 2 subfamily. The cofactor is Zn(2+).

It carries out the reaction adenine + H2O + H(+) = hypoxanthine + NH4(+). Functionally, catalyzes the hydrolytic deamination of adenine to hypoxanthine. Plays an important role in the purine salvage pathway and in nitrogen catabolism. The chain is Adenine deaminase from Wolinella succinogenes (strain ATCC 29543 / DSM 1740 / CCUG 13145 / JCM 31913 / LMG 7466 / NCTC 11488 / FDC 602W) (Vibrio succinogenes).